A 242-amino-acid chain; its full sequence is Protein GrpE (242 aa).

Residues 1 to 10 (MAGENSSTET) show a composition bias toward polar residues. Positions 1-64 (MAGENSSTET…QSTESTSKEK (64 aa)) are disordered. Basic and acidic residues predominate over residues 11 to 20 (KNQEINEKTP). Polar residues-rich tracts occupy residues 21-32 (EVQTFETNVEFE) and 40-59 (DTEL…STES).

This sequence belongs to the GrpE family. In terms of assembly, homodimer.

The protein resides in the cytoplasm. In terms of biological role, participates actively in the response to hyperosmotic and heat shock by preventing the aggregation of stress-denatured proteins, in association with DnaK and GrpE. It is the nucleotide exchange factor for DnaK and may function as a thermosensor. Unfolded proteins bind initially to DnaJ; upon interaction with the DnaJ-bound protein, DnaK hydrolyzes its bound ATP, resulting in the formation of a stable complex. GrpE releases ADP from DnaK; ATP binding to DnaK triggers the release of the substrate protein, thus completing the reaction cycle. Several rounds of ATP-dependent interactions between DnaJ, DnaK and GrpE are required for fully efficient folding. This Trichodesmium erythraeum (strain IMS101) protein is Protein GrpE.